A 62-amino-acid chain; its full sequence is Photosystem II reaction center protein Z (62 aa).

Transmembrane regions (helical) follow at residues 8 to 28 and 41 to 61; these read AVFALIATSSVLVISVPLVFA and FSGTSLWIGLVFLVAILNSLI.

The protein belongs to the PsbZ family. As to quaternary structure, PSII is composed of 1 copy each of membrane proteins PsbA, PsbB, PsbC, PsbD, PsbE, PsbF, PsbH, PsbI, PsbJ, PsbK, PsbL, PsbM, PsbT, PsbY, PsbZ, Psb30/Ycf12, at least 3 peripheral proteins of the oxygen-evolving complex and a large number of cofactors. It forms dimeric complexes.

It localises to the plastid. It is found in the chloroplast thylakoid membrane. Functionally, may control the interaction of photosystem II (PSII) cores with the light-harvesting antenna, regulates electron flow through the 2 photosystem reaction centers. PSII is a light-driven water plastoquinone oxidoreductase, using light energy to abstract electrons from H(2)O, generating a proton gradient subsequently used for ATP formation. The protein is Photosystem II reaction center protein Z of Hordeum vulgare (Barley).